The chain runs to 439 residues: Sorting nexin-31 (439 aa).

Residues 1-109 (MKMHFCIPVS…EFLTLVQLHT (109 aa)) form the PX domain. The interval 384–409 (TEQSPEMQIEVPEQGRSKKHPSQPSQ) is disordered.

It belongs to the sorting nexin family. Interacts with CCDC22, CCDC93, VPS26C and VPS35L, associates with the retriever and CCC complexes.

Functionally, may be involved in protein trafficking. This is Sorting nexin-31 (Snx31) from Mus musculus (Mouse).